The following is a 258-amino-acid chain: Indole-3-glycerol phosphate synthase (258 aa).

Belongs to the TrpC family.

The catalysed reaction is 1-(2-carboxyphenylamino)-1-deoxy-D-ribulose 5-phosphate + H(+) = (1S,2R)-1-C-(indol-3-yl)glycerol 3-phosphate + CO2 + H2O. It functions in the pathway amino-acid biosynthesis; L-tryptophan biosynthesis; L-tryptophan from chorismate: step 4/5. The protein is Indole-3-glycerol phosphate synthase of Legionella pneumophila (strain Lens).